We begin with the raw amino-acid sequence, 393 residues long: Acyltransferase ato1 (393 aa).

Belongs to the lysine N-acyltransferase mbtK family.

It participates in siderophore biosynthesis; ferrichrome biosynthesis. In terms of biological role, L-ornithine N(5)-monooxygenase; part of the siderophore biosynthetic pathway. Omphalotus olearius produces ferrichrome A, but no other siderophore has been detected. Ferrichrome A consists of a hexapeptide ring made up of one glycine, two serine, and three N(5)-hydroxyornithine amino acid residues, the latter acylated by trans-(alpha-methyl)-glutaconic acid residues. The biosynthesis of ferrichrome A depends on the hydroxylation of ornithine to N(5)-hydroxyornithine, catalyzed by the monooxygenase omo1. The second step, the acylation of N(5)-hydroxy-L-ornithine is probably catalyzed by the N-acyltransferase ato1. Finally, assembly of ferrichrome A is catalyzed by the nonribosomal peptide synthase (NRPS) fso1. This is Acyltransferase ato1 from Omphalotus olearius (Jack o'lantern).